Consider the following 356-residue polypeptide: Holliday junction branch migration complex subunit RuvB (356 aa).

The tract at residues T4–Y190 is large ATPase domain (RuvB-L). ATP-binding positions include L29, R30, G71, K74, T75, T76, E137–Y139, R180, Y190, and R227. Residue T75 participates in Mg(2+) binding. The tract at residues D191–D261 is small ATPAse domain (RuvB-S). A head domain (RuvB-H) region spans residues P264 to C356. The DNA site is built by R300, R319, and R324.

The protein belongs to the RuvB family. In terms of assembly, homohexamer. Forms an RuvA(8)-RuvB(12)-Holliday junction (HJ) complex. HJ DNA is sandwiched between 2 RuvA tetramers; dsDNA enters through RuvA and exits via RuvB. An RuvB hexamer assembles on each DNA strand where it exits the tetramer. Each RuvB hexamer is contacted by two RuvA subunits (via domain III) on 2 adjacent RuvB subunits; this complex drives branch migration. In the full resolvosome a probable DNA-RuvA(4)-RuvB(12)-RuvC(2) complex forms which resolves the HJ.

It localises to the cytoplasm. It carries out the reaction ATP + H2O = ADP + phosphate + H(+). The RuvA-RuvB-RuvC complex processes Holliday junction (HJ) DNA during genetic recombination and DNA repair, while the RuvA-RuvB complex plays an important role in the rescue of blocked DNA replication forks via replication fork reversal (RFR). RuvA specifically binds to HJ cruciform DNA, conferring on it an open structure. The RuvB hexamer acts as an ATP-dependent pump, pulling dsDNA into and through the RuvAB complex. RuvB forms 2 homohexamers on either side of HJ DNA bound by 1 or 2 RuvA tetramers; 4 subunits per hexamer contact DNA at a time. Coordinated motions by a converter formed by DNA-disengaged RuvB subunits stimulates ATP hydrolysis and nucleotide exchange. Immobilization of the converter enables RuvB to convert the ATP-contained energy into a lever motion, pulling 2 nucleotides of DNA out of the RuvA tetramer per ATP hydrolyzed, thus driving DNA branch migration. The RuvB motors rotate together with the DNA substrate, which together with the progressing nucleotide cycle form the mechanistic basis for DNA recombination by continuous HJ branch migration. Branch migration allows RuvC to scan DNA until it finds its consensus sequence, where it cleaves and resolves cruciform DNA. The protein is Holliday junction branch migration complex subunit RuvB of Burkholderia pseudomallei (strain 668).